The sequence spans 347 residues: Probable tRNA N6-adenosine threonylcarbamoyltransferase (347 aa).

A divalent metal cation is bound by residues H109, H113, and Y130. Residues Y130 to G134, D162, G177, E181, and N277 contribute to the substrate site. Residue D305 coordinates a divalent metal cation.

The protein belongs to the KAE1 / TsaD family. As to quaternary structure, component of the EKC/KEOPS complex; the whole complex dimerizes. Requires a divalent metal cation as cofactor.

It localises to the cytoplasm. Its subcellular location is the nucleus. It catalyses the reaction L-threonylcarbamoyladenylate + adenosine(37) in tRNA = N(6)-L-threonylcarbamoyladenosine(37) in tRNA + AMP + H(+). Its function is as follows. Component of the EKC/KEOPS complex that is required for the formation of a threonylcarbamoyl group on adenosine at position 37 (t(6)A37) in tRNAs that read codons beginning with adenine. The complex is probably involved in the transfer of the threonylcarbamoyl moiety of threonylcarbamoyl-AMP (TC-AMP) to the N6 group of A37. Likely plays a direct catalytic role in this reaction, but requires other protein(s) of the complex to fulfill this activity. This Drosophila melanogaster (Fruit fly) protein is Probable tRNA N6-adenosine threonylcarbamoyltransferase.